Here is a 166-residue protein sequence, read N- to C-terminus: ATP synthase subunit b 1 (166 aa).

The helical transmembrane segment at 7–29 (FWTALAFVLFFVIFGRKLWVAIT) threads the bilayer.

It belongs to the ATPase B chain family. As to quaternary structure, F-type ATPases have 2 components, F(1) - the catalytic core - and F(0) - the membrane proton channel. F(1) has five subunits: alpha(3), beta(3), gamma(1), delta(1), epsilon(1). F(0) has three main subunits: a(1), b(2) and c(10-14). The alpha and beta chains form an alternating ring which encloses part of the gamma chain. F(1) is attached to F(0) by a central stalk formed by the gamma and epsilon chains, while a peripheral stalk is formed by the delta and b chains.

It localises to the cell inner membrane. In terms of biological role, f(1)F(0) ATP synthase produces ATP from ADP in the presence of a proton or sodium gradient. F-type ATPases consist of two structural domains, F(1) containing the extramembraneous catalytic core and F(0) containing the membrane proton channel, linked together by a central stalk and a peripheral stalk. During catalysis, ATP synthesis in the catalytic domain of F(1) is coupled via a rotary mechanism of the central stalk subunits to proton translocation. Its function is as follows. Component of the F(0) channel, it forms part of the peripheral stalk, linking F(1) to F(0). The sequence is that of ATP synthase subunit b 1 from Gluconobacter oxydans (strain 621H) (Gluconobacter suboxydans).